The sequence spans 271 residues: Gasdermin bGSDM (271 aa).

Cysteine 7 carries S-palmitoyl cysteine lipidation. 4 beta stranded membrane-spanning segments follow: residues 74-90 (IAGT…GLSV), 102-120 (TLGV…FEFS), 168-185 (RINV…GLNL), and 194-210 (ANVK…TVSF).

The protein belongs to the bacterial gasdermin family. As to quaternary structure, monomer. Forms large, homooligomeric ring-shaped pores when inserted in membranes. Palmitoylation helps stabilize the inactive state; may self palmitoylate. Palmitoylation plays a significant role in pore formation.

Its subcellular location is the cytoplasm. It is found in the cell inner membrane. With respect to regulation, the full-length protein before cleavage is inactive: intramolecular interactions between the N-terminal domain and the C-terminal region as well as the lipid modification, mediate autoinhibition. The pyroptosis-like-inducing activity is carried by the released N-terminal domain (Gasdermin bGSDM, N-terminus). Its function is as follows. Involved in defense against bacteriophages. When this probable 4 gene operon (bGSDM-FE772_23060-FE772_23065-FE772_23070) is inserted into E.coli it provides nearly 100-fold protection against phages T5 and T6 and about 8-fold against phage T4. The operon without bGSDM no longer protects against phage. Cleavage of this precursor by its dedicated protease(s) releases the active moiety (gasdermin bGSDM, N-terminus) which inserts into membranes, forming pores and triggering cell death. Functionally, pore-forming protein that causes membrane permeabilization via a pyroptosis-like activity. Makes ring-like pores when released. The protein is Gasdermin bGSDM of Lysobacter enzymogenes.